The sequence spans 164 residues: Crossover junction endodeoxyribonuclease RuvC (164 aa).

Residues Asp-7, Glu-67, and Asp-140 contribute to the active site. Mg(2+) contacts are provided by Asp-7, Glu-67, and Asp-140.

Belongs to the RuvC family. As to quaternary structure, homodimer which binds Holliday junction (HJ) DNA. The HJ becomes 2-fold symmetrical on binding to RuvC with unstacked arms; it has a different conformation from HJ DNA in complex with RuvA. In the full resolvosome a probable DNA-RuvA(4)-RuvB(12)-RuvC(2) complex forms which resolves the HJ. It depends on Mg(2+) as a cofactor.

The protein resides in the cytoplasm. The enzyme catalyses Endonucleolytic cleavage at a junction such as a reciprocal single-stranded crossover between two homologous DNA duplexes (Holliday junction).. Its function is as follows. The RuvA-RuvB-RuvC complex processes Holliday junction (HJ) DNA during genetic recombination and DNA repair. Endonuclease that resolves HJ intermediates. Cleaves cruciform DNA by making single-stranded nicks across the HJ at symmetrical positions within the homologous arms, yielding a 5'-phosphate and a 3'-hydroxyl group; requires a central core of homology in the junction. The consensus cleavage sequence is 5'-(A/T)TT(C/G)-3'. Cleavage occurs on the 3'-side of the TT dinucleotide at the point of strand exchange. HJ branch migration catalyzed by RuvA-RuvB allows RuvC to scan DNA until it finds its consensus sequence, where it cleaves and resolves the cruciform DNA. This chain is Crossover junction endodeoxyribonuclease RuvC, found in Alkaliphilus oremlandii (strain OhILAs) (Clostridium oremlandii (strain OhILAs)).